The sequence spans 218 residues: uncharacterized protein (218 aa).

The RING-type zinc-finger motif lies at 154-199 (CFICTMEYSRTDKNLHPIILNCGHNLCRSCINKLTGNGIVKCPFDR).

This is an uncharacterized protein from Caenorhabditis elegans.